The chain runs to 413 residues: Multifunctional CCA protein (413 aa).

Residues Gly-8 and Arg-11 each coordinate ATP. CTP-binding residues include Gly-8 and Arg-11. Mg(2+) is bound by residues Asp-21 and Asp-23. Residues Arg-91, Arg-137, and Arg-140 each contribute to the ATP site. Arg-91, Arg-137, and Arg-140 together coordinate CTP. The HD domain occupies Thr-228–Trp-329.

The protein belongs to the tRNA nucleotidyltransferase/poly(A) polymerase family. Bacterial CCA-adding enzyme type 1 subfamily. Monomer. Can also form homodimers and oligomers. Mg(2+) is required as a cofactor. It depends on Ni(2+) as a cofactor.

It catalyses the reaction a tRNA precursor + 2 CTP + ATP = a tRNA with a 3' CCA end + 3 diphosphate. The enzyme catalyses a tRNA with a 3' CCA end + 2 CTP + ATP = a tRNA with a 3' CCACCA end + 3 diphosphate. Functionally, catalyzes the addition and repair of the essential 3'-terminal CCA sequence in tRNAs without using a nucleic acid template. Adds these three nucleotides in the order of C, C, and A to the tRNA nucleotide-73, using CTP and ATP as substrates and producing inorganic pyrophosphate. tRNA 3'-terminal CCA addition is required both for tRNA processing and repair. Also involved in tRNA surveillance by mediating tandem CCA addition to generate a CCACCA at the 3' terminus of unstable tRNAs. While stable tRNAs receive only 3'-terminal CCA, unstable tRNAs are marked with CCACCA and rapidly degraded. This is Multifunctional CCA protein from Salmonella typhimurium (strain LT2 / SGSC1412 / ATCC 700720).